Consider the following 457-residue polypeptide: ATP synthase subunit beta (457 aa).

Position 147–154 (147–154 (GGAGVGKT)) interacts with ATP.

The protein belongs to the ATPase alpha/beta chains family. In terms of assembly, F-type ATPases have 2 components, CF(1) - the catalytic core - and CF(0) - the membrane proton channel. CF(1) has five subunits: alpha(3), beta(3), gamma(1), delta(1), epsilon(1). CF(0) has three main subunits: a(1), b(2) and c(9-12). The alpha and beta chains form an alternating ring which encloses part of the gamma chain. CF(1) is attached to CF(0) by a central stalk formed by the gamma and epsilon chains, while a peripheral stalk is formed by the delta and b chains.

It is found in the cell inner membrane. It catalyses the reaction ATP + H2O + 4 H(+)(in) = ADP + phosphate + 5 H(+)(out). Produces ATP from ADP in the presence of a proton gradient across the membrane. The catalytic sites are hosted primarily by the beta subunits. The chain is ATP synthase subunit beta from Haemophilus influenzae (strain 86-028NP).